The primary structure comprises 834 residues: Probable receptor-like protein kinase At2g23200 (834 aa).

A signal peptide spans 1-28 (MENFCFQDSVSLFITIMVLVLLPRLSLS). Over 29-405 (DTSTYTRPEN…SSSRVHIITG (377 aa)) the chain is Extracellular. Residues Asn-61, Asn-149, Asn-221, Asn-246, Asn-277, Asn-289, Asn-314, Asn-352, Asn-361, and Asn-394 are each glycosylated (N-linked (GlcNAc...) asparagine). The chain crosses the membrane as a helical span at residues 406–426 (CAVAAAAASALVFSLLFMVFL). Residues 427-834 (KRRRSKKTKP…FSQLKISDAR (408 aa)) are Cytoplasmic-facing. Positions 488–761 (FDEQLLIGKG…RDVIWDLEYV (274 aa)) constitute a Protein kinase domain. ATP-binding positions include 494 to 502 (IGKGGFGYV) and Lys-516. Residue Asp-613 is the Proton acceptor of the active site.

This sequence belongs to the protein kinase superfamily. Ser/Thr protein kinase family.

It localises to the membrane. The sequence is that of Probable receptor-like protein kinase At2g23200 from Arabidopsis thaliana (Mouse-ear cress).